Consider the following 478-residue polypeptide: MPSFNPVRFLELPIDIRKEVYFHLDGNFCGAHPYPIDILYKSNDVELPGKPSYKRSKRSKKLLRYMYPVFATYLNIFEYSPQLIEKWLEYAFWLRYDCLVLDCFKVNHLYDGTLIDALEWTYLDNELRLAYFNKASMLEVWYTFKEYKKWVIDSVAFDELDLLNVSNIQFNIDNLTPQLVDKCLSILEQKDLFATIGEVQFGQDEEVGEEKDVDVSGANSDENSSPSSTIKNKKRSASKRSHSDNGNVGATHNQLTSISVIRTIRSMESMKSLRKITVRGEKLYELLINFHGFRDNPGKTISYIVKRRINEIRLSRMNQISRTGLADFTRWDNLQKLVLSRVAYIDLNSIVFPKNFKSLTMKRVSKIKWWNIEENILKELKVDKRTFKSLYIKEDDSKFTKFFNLRHTRIKELDKSEINQITYLRCQAIVWLSFRTLNHIKLQNVSEVFNNIIVPRALFDSKRVEIYRCEKISQVLVI.

A disordered region spans residues 206-251 (EVGEEKDVDVSGANSDENSSPSSTIKNKKRSASKRSHSDNGNVGAT). Over residues 217 to 230 (GANSDENSSPSSTI) the composition is skewed to polar residues. Residues 231 to 240 (KNKKRSASKR) show a composition bias toward basic residues.

In terms of assembly, component of the CBF3 copmplex, which is formed of CBF3A/CBF2, CBF3B/CEP3, CBF3C/CTF13 and CBF3D. CBF3C interacts with CBF3D and SGT1.

It localises to the nucleus. Its subcellular location is the chromosome. It is found in the centromere. Acts as a central component of the centromere DNA-binding protein complex CBF3, which is essential for chromosome segregation and movement of centromeres along microtubules. CBF3 is required for the recruitment of other kinetochore complexes to CEN DNA. It plays a role in the attachment of chromosomes to the spindle and binds selectively to a highly conserved DNA sequence called CDEIII, found in centromers and in several promoters. The association of CBF3C with CBF3D and SGT1 is required for CBF3C activation and CBF3 assembly. The sequence is that of Centromere DNA-binding protein complex CBF3 subunit C (CTF13) from Saccharomyces cerevisiae (strain ATCC 204508 / S288c) (Baker's yeast).